Reading from the N-terminus, the 319-residue chain is Exopolyphosphatase 2 (319 aa).

This sequence belongs to the GppA/Ppx family. Homodimer.

The catalysed reaction is [phosphate](n) + H2O = [phosphate](n-1) + phosphate + H(+). Its activity is regulated as follows. Exopolyphosphatase activity is inhibited by ppGpp alarmones produced during the bacterial stringent response. Its function is as follows. Degradation of inorganic polyphosphates (polyP). Releases orthophosphate processively from the ends of the polyP chain. Prefers long-chain length polyphosphates as substrates. The chain is Exopolyphosphatase 2 from Mycobacterium tuberculosis (strain CDC 1551 / Oshkosh).